A 364-amino-acid chain; its full sequence is tRNA 2-selenouridine synthase (364 aa).

A Rhodanese domain is found at 14–137; the sequence is LIADTPIIDV…LRQTAIQATI (124 aa). Residue Cys-97 is the S-selanylcysteine intermediate of the active site.

It belongs to the SelU family. Monomer.

It catalyses the reaction 5-methylaminomethyl-2-thiouridine(34) in tRNA + selenophosphate + (2E)-geranyl diphosphate + H2O + H(+) = 5-methylaminomethyl-2-selenouridine(34) in tRNA + (2E)-thiogeraniol + phosphate + diphosphate. The catalysed reaction is 5-methylaminomethyl-2-thiouridine(34) in tRNA + (2E)-geranyl diphosphate = 5-methylaminomethyl-S-(2E)-geranyl-thiouridine(34) in tRNA + diphosphate. It carries out the reaction 5-methylaminomethyl-S-(2E)-geranyl-thiouridine(34) in tRNA + selenophosphate + H(+) = 5-methylaminomethyl-2-(Se-phospho)selenouridine(34) in tRNA + (2E)-thiogeraniol. The enzyme catalyses 5-methylaminomethyl-2-(Se-phospho)selenouridine(34) in tRNA + H2O = 5-methylaminomethyl-2-selenouridine(34) in tRNA + phosphate. In terms of biological role, involved in the post-transcriptional modification of the uridine at the wobble position (U34) of tRNA(Lys), tRNA(Glu) and tRNA(Gln). Catalyzes the conversion of 2-thiouridine (S2U-RNA) to 2-selenouridine (Se2U-RNA). Acts in a two-step process involving geranylation of 2-thiouridine (S2U) to S-geranyl-2-thiouridine (geS2U) and subsequent selenation of the latter derivative to 2-selenouridine (Se2U) in the tRNA chain. This is tRNA 2-selenouridine synthase from Escherichia coli O17:K52:H18 (strain UMN026 / ExPEC).